The primary structure comprises 550 residues: M-phase inducer phosphatase 1-B (550 aa).

Disordered stretches follow at residues 76–98 (NLGDETAPLPTESPDRISSGKVE) and 285–335 (SPSM…QRRG). Over residues 290-310 (EKLDRPMLKRPVRPLDSETPV) the composition is skewed to basic and acidic residues. A compositionally biased stretch (polar residues) spans 322–335 (LQPQEENFQPQRRG). The Rhodanese domain occupies 401–508 (LVEKIFIIDC…FFPEYKELCE (108 aa)). Residue Cys457 is part of the active site.

The protein belongs to the MPI phosphatase family.

It catalyses the reaction O-phospho-L-tyrosyl-[protein] + H2O = L-tyrosyl-[protein] + phosphate. In terms of biological role, tyrosine protein phosphatase which functions as a dosage-dependent inducer of mitotic progression. Directly dephosphorylates CDK1 and stimulates its kinase activity. The chain is M-phase inducer phosphatase 1-B (cdc25-1-b) from Xenopus laevis (African clawed frog).